The sequence spans 322 residues: uncharacterized protein (322 aa).

A helical membrane pass occupies residues Val212–Val234.

Its subcellular location is the membrane. This is an uncharacterized protein from Rickettsia prowazekii (strain Madrid E).